A 230-amino-acid chain; its full sequence is Ribose-5-phosphate isomerase A (230 aa).

Residues 32 to 35 (TGST), 85 to 88 (DGAD), and 98 to 101 (KGGG) each bind substrate. Glu-107 functions as the Proton acceptor in the catalytic mechanism. Lys-125 contributes to the substrate binding site.

The protein belongs to the ribose 5-phosphate isomerase family. In terms of assembly, homodimer.

It carries out the reaction aldehydo-D-ribose 5-phosphate = D-ribulose 5-phosphate. It functions in the pathway carbohydrate degradation; pentose phosphate pathway; D-ribose 5-phosphate from D-ribulose 5-phosphate (non-oxidative stage): step 1/1. Catalyzes the reversible conversion of ribose-5-phosphate to ribulose 5-phosphate. The chain is Ribose-5-phosphate isomerase A from Burkholderia ambifaria (strain ATCC BAA-244 / DSM 16087 / CCUG 44356 / LMG 19182 / AMMD) (Burkholderia cepacia (strain AMMD)).